Here is a 339-residue protein sequence, read N- to C-terminus: MWWSLIPLSCLLALTSAHDKPSSHPLSDDMINYINKQNTTWQAGRNFYNVDISYLKKLCGTVLGGPNLPERVGFSEDINLPESFDAREQWSNCPTIAQIRDQGSCGSCWAFGAVEAMSDRICIHTNGRVNVEVSAEDLLTCCGIQCGDGCNGGYPSGAWNFWTRKGLVSGGVYNSHIGCLPYTIPPCEHHVNGSRPPCTGEGDTPKCNKMCEAGYSTSYKEDKHYGYTSYSVSDSEKEIMAEIYKNGPVEGAFTVFSDFLTYKSGVYKHEAGDVMGGHAIRILGWGIENGVPYWLVANSWNVDWGDNGFFKILRGENHCGIESEIVAGIPRTQQYWGRF.

The N-terminal stretch at 1 to 17 (MWWSLIPLSCLLALTSA) is a signal peptide. Residues 18–79 (HDKPSSHPLS…ERVGFSEDIN (62 aa)) constitute a propeptide, activation peptide. Disulfide bonds link cysteine 93-cysteine 122, cysteine 105-cysteine 150, cysteine 141-cysteine 207, cysteine 142-cysteine 146, cysteine 179-cysteine 211, and cysteine 187-cysteine 198. The active site involves cysteine 108. Asparagine 192 is a glycosylation site (N-linked (GlcNAc...) asparagine). Lysine 220 is subject to N6-acetyllysine. Residues histidine 278 and asparagine 298 contribute to the active site. A propeptide spanning residues 334–339 (QYWGRF) is cleaved from the precursor.

This sequence belongs to the peptidase C1 family. Dimer of a heavy chain and a light chain cross-linked by a disulfide bond. Interacts with SRPX2. Directly interacts with SHKBP1. In terms of tissue distribution, expressed in the epithelial cells of the prostate and mammary gland.

The protein localises to the lysosome. The protein resides in the melanosome. Its subcellular location is the secreted. It localises to the extracellular space. It is found in the apical cell membrane. The enzyme catalyses Hydrolysis of proteins with broad specificity for peptide bonds. Preferentially cleaves -Arg-Arg-|-Xaa bonds in small molecule substrates (thus differing from cathepsin L). In addition to being an endopeptidase, shows peptidyl-dipeptidase activity, liberating C-terminal dipeptides.. Functionally, thiol protease which is believed to participate in intracellular degradation and turnover of proteins. Cleaves matrix extracellular phosphoglycoprotein MEPE. Involved in the solubilization of cross-linked TG/thyroglobulin in the thyroid follicle lumen. Has also been implicated in tumor invasion and metastasis. This is Cathepsin B (Ctsb) from Rattus norvegicus (Rat).